We begin with the raw amino-acid sequence, 412 residues long: Protein ALF (412 aa).

2 disordered regions span residues 1–47 (MDPE…PLPP) and 154–234 (GLSE…GISE). Residues 31–47 (PPQPPPPPLPPPQPLPP) are compositionally biased toward pro residues. The segment covering 187-196 (MRQRRRKKVV) has biased composition (basic residues). The segment covering 206 to 221 (MEEDEDTEEGQEDNED) has biased composition (acidic residues). DNA-binding regions lie at residues 237–241 (REHPF), 306–313 (NKPKMRHY), and 377–380 (YVPT).

This sequence belongs to the FLO/LFY family. Expressed in the floral meristem and also in the vegetative meristem.

It is found in the nucleus. Probable transcription factor required for the specification of floral meristem identity. This is Protein ALF (ALF) from Petunia hybrida (Petunia).